The chain runs to 282 residues: Small ribosomal subunit protein uS2 (282 aa).

The tract at residues 245-266 (AEEAVEELPLPTGEAQDEASSK) is disordered.

The protein belongs to the universal ribosomal protein uS2 family.

The protein is Small ribosomal subunit protein uS2 (rpsB) of Chlamydia trachomatis serovar D (strain ATCC VR-885 / DSM 19411 / UW-3/Cx).